The sequence spans 314 residues: uncharacterized protein (314 aa).

The N-terminal 29 residues, 1-29 (MMRLIRTLPLRCFKTRIRRQGSLLCLRCF), are a transit peptide targeting the mitochondrion. Residues 52 to 74 (SSSPLSKNKEKQEKPEKENEGKH) are disordered. The segment covering 58 to 74 (KNKEKQEKPEKENEGKH) has biased composition (basic and acidic residues). Positions 177-207 (LNEHHLQLLKLKRELNSIHDELNEIIIDLLQ) form a coiled coil. The helical transmembrane segment at 262–279 (GLLVILVLVCSIMIGVSA) threads the bilayer. A disordered region spans residues 281–314 (KKERPGLQEPEEPEILAPKEDIDTTFPQDQHDID).

It localises to the mitochondrion membrane. This is an uncharacterized protein from Saccharomyces cerevisiae (strain ATCC 204508 / S288c) (Baker's yeast).